Consider the following 507-residue polypeptide: Flagellar hook-associated protein 1 (507 aa).

The protein belongs to the flagella basal body rod proteins family.

It localises to the secreted. The protein resides in the bacterial flagellum. This Bacillus subtilis (strain 168) protein is Flagellar hook-associated protein 1 (flgK).